The chain runs to 255 residues: 3-deoxy-manno-octulosonate cytidylyltransferase (255 aa).

The protein belongs to the KdsB family.

The protein localises to the cytoplasm. It carries out the reaction 3-deoxy-alpha-D-manno-oct-2-ulosonate + CTP = CMP-3-deoxy-beta-D-manno-octulosonate + diphosphate. It functions in the pathway nucleotide-sugar biosynthesis; CMP-3-deoxy-D-manno-octulosonate biosynthesis; CMP-3-deoxy-D-manno-octulosonate from 3-deoxy-D-manno-octulosonate and CTP: step 1/1. It participates in bacterial outer membrane biogenesis; lipopolysaccharide biosynthesis. In terms of biological role, activates KDO (a required 8-carbon sugar) for incorporation into bacterial lipopolysaccharide in Gram-negative bacteria. In Hahella chejuensis (strain KCTC 2396), this protein is 3-deoxy-manno-octulosonate cytidylyltransferase.